The chain runs to 205 residues: Interleukin-6 (205 aa).

An N-terminal signal peptide occupies residues R1–P21. Cysteines 64 and 70 form a disulfide. Residue S73 is modified to Phosphoserine. Cysteines 93 and 103 form a disulfide. The N-linked (GlcNAc...) asparagine glycan is linked to N164.

It belongs to the IL-6 superfamily. Component of a hexamer of two molecules each of IL6, IL6R and IL6ST; first binds to IL6R to associate with the signaling subunit IL6ST. Interacts with IL6R (via the N-terminal ectodomain); this interaction may be affected by IL6R-binding with SORL1, hence decreasing IL6 cis signaling. Interacts with SORL1 (via the N-terminal ectodomain); this interaction leads to IL6 internalization and lysosomal degradation. May form a trimeric complex with the soluble SORL1 ectodomain and soluble IL6R receptor; this interaction might stabilize circulating IL6, hence promoting IL6 trans signaling.

The protein localises to the secreted. Functionally, cytokine with a wide variety of biological functions in immunity, tissue regeneration, and metabolism. Binds to IL6R, then the complex associates to the signaling subunit IL6ST/gp130 to trigger the intracellular IL6-signaling pathway. The interaction with the membrane-bound IL6R and IL6ST stimulates 'classic signaling', whereas the binding of IL6 and soluble IL6R to IL6ST stimulates 'trans-signaling'. Alternatively, 'cluster signaling' occurs when membrane-bound IL6:IL6R complexes on transmitter cells activate IL6ST receptors on neighboring receiver cells. IL6 is a potent inducer of the acute phase response. Rapid production of IL6 contributes to host defense during infection and tissue injury, but excessive IL6 synthesis is involved in disease pathology. In the innate immune response, is synthesized by myeloid cells, such as macrophages and dendritic cells, upon recognition of pathogens through toll-like receptors (TLRs) at the site of infection or tissue injury. In the adaptive immune response, is required for the differentiation of B cells into immunoglobulin-secreting cells. Plays a major role in the differentiation of CD4(+) T cell subsets. Essential factor for the development of T follicular helper (Tfh) cells that are required for the induction of germinal-center formation. Required to drive naive CD4(+) T cells to the Th17 lineage. Also required for proliferation of myeloma cells and the survival of plasmablast cells. In terms of biological role, acts as an essential factor in bone homeostasis and on vessels directly or indirectly by induction of VEGF, resulting in increased angiogenesis activity and vascular permeability. Induces, through 'trans-signaling' and synergistically with IL1B and TNF, the production of VEGF. Involved in metabolic controls, is discharged into the bloodstream after muscle contraction increasing lipolysis and improving insulin resistance. 'Trans-signaling' in central nervous system also regulates energy and glucose homeostasis. Mediates, through GLP-1, crosstalk between insulin-sensitive tissues, intestinal L cells and pancreatic islets to adapt to changes in insulin demand. Also acts as a myokine. Plays a protective role during liver injury, being required for maintenance of tissue regeneration. Also has a pivotal role in iron metabolism by regulating HAMP/hepcidin expression upon inflammation or bacterial infection. Through activation of IL6ST-YAP-NOTCH pathway, induces inflammation-induced epithelial regeneration. The chain is Interleukin-6 (IL6) from Orcinus orca (Killer whale).